We begin with the raw amino-acid sequence, 504 residues long: Diacylglycerol O-acyltransferase 1B (504 aa).

Positions 1–72 (MAISDEPESV…VNSQQQNEKQ (72 aa)) are disordered. The span at 24–41 (SATSTAGLFNSPETTTDS) shows a compositional bias: polar residues. The span at 53–65 (DDSINSDDAAVNS) shows a compositional bias: low complexity. Transmembrane regions (helical) follow at residues 108–128 (HAGL…RLII), 152–172 (WPLF…FIVE), 184–204 (VVVV…VLVI), 209–229 (SAFV…LKLV), 259–279 (YPYN…TLCY), 301–321 (LIIF…PIVQ), and 348–368 (VWLC…AELL). An FYXDWWN motif motif is present at residues 375 to 381 (FYKDWWN). 3 consecutive transmembrane segments (helical) span residues 416–436 (AAAL…CIAV), 438–458 (CHIF…LVLI), and 471–491 (VGNM…CVLL). Residue histidine 430 is part of the active site.

The protein belongs to the membrane-bound acyltransferase family. Sterol o-acyltransferase subfamily. As to expression, highly expressed in flowers and pods. Expressed at low levels in roots, stems and leaves.

Its subcellular location is the endoplasmic reticulum membrane. It catalyses the reaction an acyl-CoA + a 1,2-diacyl-sn-glycerol = a triacyl-sn-glycerol + CoA. Its pathway is glycerolipid metabolism; triacylglycerol biosynthesis. In terms of biological role, major contributors to triacylglycerol (TAG) synthesis and oil accumulation in developing seeds. Catalyzes the acylation of the sn-3 hydroxy group of sn-1,2-diacylglycerol using acyl-CoA. Has a marked preference for oleoyl-CoA and sn-1,2-dioleoylglycerol over vernoloyl-CoA and sn-1,2-divernoloylglycerol. The sequence is that of Diacylglycerol O-acyltransferase 1B from Glycine max (Soybean).